We begin with the raw amino-acid sequence, 327 residues long: Ankyrin repeat domain-containing protein SOWAHD (327 aa).

The disordered stretch occupies residues 1 to 31; the sequence is MAQALEDGNPLPKASNRPAESEAPSDPQIKD. ANK repeat units lie at residues 112 to 141, 147 to 162, and 186 to 216; these read CLEPREHAWILAAAECRFEVLLEMLEAEPS, DPITGYSVLHWLAKHG, and PGSGGLTPLHLAALQGHDMVIKVLVGALGAD. A disordered region spans residues 251-311; it reads ERDRKRENAN…EKKASSTQEG (61 aa). Over residues 260-275 the composition is skewed to low complexity; sequence NNNSSRTTTTTTTTSR. Positions 292-305 are enriched in basic and acidic residues; sequence HYKEASQPVKEKKA.

Belongs to the SOWAH family.

The polypeptide is Ankyrin repeat domain-containing protein SOWAHD (Sowahd) (Mus musculus (Mouse)).